The following is a 99-amino-acid chain: DNA-directed RNA polymerase subunit omega (99 aa).

This sequence belongs to the RNA polymerase subunit omega family. The RNAP catalytic core consists of 2 alpha, 1 beta, 1 beta' and 1 omega subunit. When a sigma factor is associated with the core the holoenzyme is formed, which can initiate transcription.

The enzyme catalyses RNA(n) + a ribonucleoside 5'-triphosphate = RNA(n+1) + diphosphate. Functionally, promotes RNA polymerase assembly. Latches the N- and C-terminal regions of the beta' subunit thereby facilitating its interaction with the beta and alpha subunits. The chain is DNA-directed RNA polymerase subunit omega (rpoZ) from Xylella fastidiosa (strain 9a5c).